Here is a 444-residue protein sequence, read N- to C-terminus: N-succinylarginine dihydrolase (444 aa).

Substrate contacts are provided by residues 19–28 (AGLSFGNVAS), N110, and 137–138 (HR). The active site involves E174. R214 lines the substrate pocket. H250 is an active-site residue. Substrate contacts are provided by D252 and N362. The active-site Nucleophile is the C368.

It belongs to the succinylarginine dihydrolase family. In terms of assembly, homodimer.

The catalysed reaction is N(2)-succinyl-L-arginine + 2 H2O + 2 H(+) = N(2)-succinyl-L-ornithine + 2 NH4(+) + CO2. Its pathway is amino-acid degradation; L-arginine degradation via AST pathway; L-glutamate and succinate from L-arginine: step 2/5. In terms of biological role, catalyzes the hydrolysis of N(2)-succinylarginine into N(2)-succinylornithine, ammonia and CO(2). This chain is N-succinylarginine dihydrolase, found in Shewanella oneidensis (strain ATCC 700550 / JCM 31522 / CIP 106686 / LMG 19005 / NCIMB 14063 / MR-1).